We begin with the raw amino-acid sequence, 711 residues long: Polyribonucleotide nucleotidyltransferase (711 aa).

Mg(2+) contacts are provided by Asp-486 and Asp-492. The 60-residue stretch at Pro-553 to Ile-612 folds into the KH domain. Residues Gly-622 to Lys-690 form the S1 motif domain. Residues Lys-690–Glu-711 are disordered. A compositionally biased stretch (low complexity) spans Pro-698–Glu-711.

The protein belongs to the polyribonucleotide nucleotidyltransferase family. In terms of assembly, component of the RNA degradosome, which is a multiprotein complex involved in RNA processing and mRNA degradation. The cofactor is Mg(2+).

Its subcellular location is the cytoplasm. It carries out the reaction RNA(n+1) + phosphate = RNA(n) + a ribonucleoside 5'-diphosphate. Functionally, involved in mRNA degradation. Catalyzes the phosphorolysis of single-stranded polyribonucleotides processively in the 3'- to 5'-direction. In Escherichia coli O127:H6 (strain E2348/69 / EPEC), this protein is Polyribonucleotide nucleotidyltransferase.